Here is a 204-residue protein sequence, read N- to C-terminus: Large ribosomal subunit protein uL4 (204 aa).

The disordered stretch occupies residues 49 to 75; it reads TKGRSDVSGGGKKPWRQKGRGGARAGS.

It belongs to the universal ribosomal protein uL4 family. In terms of assembly, part of the 50S ribosomal subunit.

In terms of biological role, one of the primary rRNA binding proteins, this protein initially binds near the 5'-end of the 23S rRNA. It is important during the early stages of 50S assembly. It makes multiple contacts with different domains of the 23S rRNA in the assembled 50S subunit and ribosome. Functionally, forms part of the polypeptide exit tunnel. This is Large ribosomal subunit protein uL4 from Campylobacter jejuni subsp. jejuni serotype O:23/36 (strain 81-176).